Reading from the N-terminus, the 84-residue chain is Small ribosomal subunit protein bS20 (84 aa).

This sequence belongs to the bacterial ribosomal protein bS20 family.

Functionally, binds directly to 16S ribosomal RNA. The sequence is that of Small ribosomal subunit protein bS20 from Azobacteroides pseudotrichonymphae genomovar. CFP2.